Consider the following 178-residue polypeptide: Aspartic proteinase nepenthesin-2 (178 aa).

Asp-98 is a catalytic residue.

This sequence belongs to the peptidase A1 family.

Its subcellular location is the secreted. It catalyses the reaction Similar to pepsin, but also cleaves on either side of Asp and at Lys-|-Arg.. Its activity is regulated as follows. Inhibited by pepstatin and by diazoacetyl-D,L-norleucine methyl ester (DAN) in the presence of Cu(2+) ions. In terms of biological role, extracellular proteinase found in the pitcher fluid of carnivorous plants. Digest prey for nitrogen uptake. The polypeptide is Aspartic proteinase nepenthesin-2 (Nepenthes distillatoria (Pitcher plant)).